Reading from the N-terminus, the 160-residue chain is Transcriptional repressor NrdR (160 aa).

Residues 3–34 fold into a zinc finger; the sequence is CPYCQYEDTQVKDSRPAEEGAVIRRRRVCSVC. The ATP-cone domain maps to 49-139; sequence LLITKKNGRC…VYRDFRNASD (91 aa).

This sequence belongs to the NrdR family. It depends on Zn(2+) as a cofactor.

Negatively regulates transcription of bacterial ribonucleotide reductase nrd genes and operons by binding to NrdR-boxes. The chain is Transcriptional repressor NrdR from Bartonella tribocorum (strain CIP 105476 / IBS 506).